We begin with the raw amino-acid sequence, 92 residues long: UPF0473 protein BC_4380 (92 aa).

It belongs to the UPF0473 family.

The protein is UPF0473 protein BC_4380 of Bacillus cereus (strain ATCC 14579 / DSM 31 / CCUG 7414 / JCM 2152 / NBRC 15305 / NCIMB 9373 / NCTC 2599 / NRRL B-3711).